A 267-amino-acid polypeptide reads, in one-letter code: Phosphate import ATP-binding protein PstB 2 (267 aa).

The region spanning Leu21–Val262 is the ABC transporter domain. ATP is bound at residue Gly53–Ser60.

This sequence belongs to the ABC transporter superfamily. Phosphate importer (TC 3.A.1.7) family. As to quaternary structure, the complex is composed of two ATP-binding proteins (PstB), two transmembrane proteins (PstC and PstA) and a solute-binding protein (PstS).

The protein resides in the cell membrane. The enzyme catalyses phosphate(out) + ATP + H2O = ADP + 2 phosphate(in) + H(+). Part of the ABC transporter complex PstSACB involved in phosphate import. Responsible for energy coupling to the transport system. In Streptococcus agalactiae serotype Ia (strain ATCC 27591 / A909 / CDC SS700), this protein is Phosphate import ATP-binding protein PstB 2.